Reading from the N-terminus, the 50-residue chain is Protein PsbN (50 aa).

The chain crosses the membrane as a helical span at residues 14-34; the sequence is VAVTILAVLLALTGFGLWTAF.

It belongs to the PsbN family.

The protein resides in the cellular thylakoid membrane. May play a role in photosystem I and II biogenesis. The polypeptide is Protein PsbN (Prochlorococcus marinus subsp. pastoris (strain CCMP1986 / NIES-2087 / MED4)).